The sequence spans 756 residues: Anaphase-promoting complex subunit 5 (756 aa).

TPR repeat units lie at residues 301–334 (RYAALNLAALHCRFGHYQQAELALQEAIRIAQES), 522–555 (DGRYHIADSLVAGITALNSIEGMYRKAIVLKAQN), 581–614 (ISVLLSVAELYWRSSCHTIALPVLLQALAFSREY), and 678–711 (YSQQKKAEALESAILNLNEAKTYLAKVDCKEQLR).

This sequence belongs to the APC5 family. In terms of assembly, the APC/C is composed of at least 12 subunits.

Its subcellular location is the nucleus. The protein localises to the cytoplasm. The protein resides in the cytoskeleton. It localises to the spindle. The protein operates within protein modification; protein ubiquitination. Functionally, component of the anaphase promoting complex/cyclosome (APC/C), a cell cycle-regulated E3 ubiquitin ligase that controls progression through mitosis and the G1 phase of the cell cycle. The APC/C complex acts by mediating ubiquitination and subsequent degradation of target proteins: it mainly mediates the formation of 'Lys-11'-linked polyubiquitin chains and, to a lower extent, the formation of 'Lys-48'- and 'Lys-63'-linked polyubiquitin chains. The APC/C complex catalyzes assembly of branched 'Lys-11'-/'Lys-48'-linked branched ubiquitin chains on target proteins. This chain is Anaphase-promoting complex subunit 5 (ANAPC5), found in Gallus gallus (Chicken).